Consider the following 161-residue polypeptide: 2-C-methyl-D-erythritol 2,4-cyclodiphosphate synthase (161 aa).

A divalent metal cation contacts are provided by aspartate 10 and histidine 12. 4-CDP-2-C-methyl-D-erythritol 2-phosphate contacts are provided by residues 10–12 (DVH) and 36–37 (HS). Histidine 44 is an a divalent metal cation binding site. 4-CDP-2-C-methyl-D-erythritol 2-phosphate-binding positions include 58–60 (DIG), 63–67 (FPDTD), 102–108 (AQAPKML), 134–137 (TTTE), phenylalanine 141, and arginine 144.

The protein belongs to the IspF family. As to quaternary structure, homotrimer. The cofactor is a divalent metal cation.

The catalysed reaction is 4-CDP-2-C-methyl-D-erythritol 2-phosphate = 2-C-methyl-D-erythritol 2,4-cyclic diphosphate + CMP. Its pathway is isoprenoid biosynthesis; isopentenyl diphosphate biosynthesis via DXP pathway; isopentenyl diphosphate from 1-deoxy-D-xylulose 5-phosphate: step 4/6. Its function is as follows. Involved in the biosynthesis of isopentenyl diphosphate (IPP) and dimethylallyl diphosphate (DMAPP), two major building blocks of isoprenoid compounds. Catalyzes the conversion of 4-diphosphocytidyl-2-C-methyl-D-erythritol 2-phosphate (CDP-ME2P) to 2-C-methyl-D-erythritol 2,4-cyclodiphosphate (ME-CPP) with a corresponding release of cytidine 5-monophosphate (CMP). The polypeptide is 2-C-methyl-D-erythritol 2,4-cyclodiphosphate synthase (Shewanella loihica (strain ATCC BAA-1088 / PV-4)).